Reading from the N-terminus, the 685-residue chain is Pentatricopeptide repeat-containing protein At5g19020, mitochondrial (685 aa).

The N-terminal 23 residues, 1-23, are a transit peptide targeting the mitochondrion; that stretch reads MIKLIRFFRSRRCWVISLQARCF. PPR repeat units lie at residues 40–74, 75–105, 106–136, 137–171, 172–206, 207–237, 238–268, 269–303, 304–338, 339–369, 370–400, 401–435, 437–471, 472–502, 506–540, 541–576, and 577–607; these read TERA…GLDS, NGYI…HAKL, DSAS…MPER, SCVS…GIML, NEVT…KLEG, RVFV…MPER, NLVT…ITEK, DIVS…GMKP, SEVM…GFDC, YDFL…SVKD, HIAS…THDK, DIFS…SQVK, DAIT…TIPP, NDNL…TKNI, TISP…PIKP, NSIT…GIEP, and DIKH…MPVK. The interval 612–685 is type E motif; degenerate; the sequence is IWGMLLSASR…EWSRAFSGVV (74 aa).

Belongs to the PPR family. PCMP-E subfamily.

The protein resides in the mitochondrion. This is Pentatricopeptide repeat-containing protein At5g19020, mitochondrial (PCMP-E42) from Arabidopsis thaliana (Mouse-ear cress).